The primary structure comprises 351 residues: Nicotinate-nucleotide--dimethylbenzimidazole phosphoribosyltransferase (351 aa).

The active-site Proton acceptor is the glutamate 317.

It belongs to the CobT family.

It catalyses the reaction 5,6-dimethylbenzimidazole + nicotinate beta-D-ribonucleotide = alpha-ribazole 5'-phosphate + nicotinate + H(+). It functions in the pathway nucleoside biosynthesis; alpha-ribazole biosynthesis; alpha-ribazole from 5,6-dimethylbenzimidazole: step 1/2. In terms of biological role, catalyzes the synthesis of alpha-ribazole-5'-phosphate from nicotinate mononucleotide (NAMN) and 5,6-dimethylbenzimidazole (DMB). The polypeptide is Nicotinate-nucleotide--dimethylbenzimidazole phosphoribosyltransferase (Pseudomonas aeruginosa (strain ATCC 15692 / DSM 22644 / CIP 104116 / JCM 14847 / LMG 12228 / 1C / PRS 101 / PAO1)).